The primary structure comprises 274 residues: Tryptophan synthase alpha chain (274 aa).

Residues Glu49 and Asp60 each act as proton acceptor in the active site.

This sequence belongs to the TrpA family. In terms of assembly, tetramer of two alpha and two beta chains.

It carries out the reaction (1S,2R)-1-C-(indol-3-yl)glycerol 3-phosphate + L-serine = D-glyceraldehyde 3-phosphate + L-tryptophan + H2O. It participates in amino-acid biosynthesis; L-tryptophan biosynthesis; L-tryptophan from chorismate: step 5/5. The alpha subunit is responsible for the aldol cleavage of indoleglycerol phosphate to indole and glyceraldehyde 3-phosphate. The chain is Tryptophan synthase alpha chain from Zymomonas mobilis subsp. mobilis (strain ATCC 31821 / ZM4 / CP4).